We begin with the raw amino-acid sequence, 195 residues long: Pyruvoyl-dependent arginine decarboxylase AaxB (195 aa).

Residue S53 is modified to Pyruvic acid (Ser).

Belongs to the pyruvoyl-dependent arginine decarboxylase family. As to quaternary structure, trimer of an alpha-beta dimer. It depends on pyruvate as a cofactor.

The protein resides in the cytoplasm. The enzyme catalyses L-arginine + H(+) = agmatine + CO2. In terms of biological role, part of the AaxABC system, catalyzes the decarboxylation of L-arginine. The arginine uptake by the bacterium in the macrophage may be a virulence factor against the host innate immune response. This is Pyruvoyl-dependent arginine decarboxylase AaxB (aaxB) from Chlamydia abortus (strain DSM 27085 / S26/3) (Chlamydophila abortus).